We begin with the raw amino-acid sequence, 810 residues long: Phenylalanine--tRNA ligase beta subunit (810 aa).

The tRNA-binding domain maps to 39–154 (APPTEKIVVG…EGTPVGQDIR (116 aa)). In terms of domain architecture, B5 spans 405–480 (PQRAPVSMRA…RIYGFEKIPA (76 aa)). Residues Asp-458, Asp-464, Glu-467, and Glu-468 each coordinate Mg(2+). Residues 707 to 809 (SKFPPVRRDI…MARVYGARLR (103 aa)) enclose the FDX-ACB domain.

This sequence belongs to the phenylalanyl-tRNA synthetase beta subunit family. Type 1 subfamily. In terms of assembly, tetramer of two alpha and two beta subunits. Mg(2+) serves as cofactor.

It is found in the cytoplasm. It carries out the reaction tRNA(Phe) + L-phenylalanine + ATP = L-phenylalanyl-tRNA(Phe) + AMP + diphosphate + H(+). This chain is Phenylalanine--tRNA ligase beta subunit, found in Burkholderia pseudomallei (strain 1710b).